Consider the following 261-residue polypeptide: Imidazole glycerol phosphate synthase subunit HisF (261 aa).

Active-site residues include aspartate 11 and aspartate 130.

It belongs to the HisA/HisF family. As to quaternary structure, heterodimer of HisH and HisF.

The protein localises to the cytoplasm. The enzyme catalyses 5-[(5-phospho-1-deoxy-D-ribulos-1-ylimino)methylamino]-1-(5-phospho-beta-D-ribosyl)imidazole-4-carboxamide + L-glutamine = D-erythro-1-(imidazol-4-yl)glycerol 3-phosphate + 5-amino-1-(5-phospho-beta-D-ribosyl)imidazole-4-carboxamide + L-glutamate + H(+). The protein operates within amino-acid biosynthesis; L-histidine biosynthesis; L-histidine from 5-phospho-alpha-D-ribose 1-diphosphate: step 5/9. Functionally, IGPS catalyzes the conversion of PRFAR and glutamine to IGP, AICAR and glutamate. The HisF subunit catalyzes the cyclization activity that produces IGP and AICAR from PRFAR using the ammonia provided by the HisH subunit. The chain is Imidazole glycerol phosphate synthase subunit HisF from Heliobacterium mobile (Heliobacillus mobilis).